Reading from the N-terminus, the 328-residue chain is MPLHHLTRFPRLELIGAPTPLEYLPRLSDYPGREIYIKRDDVTPIAMGGNKLRKLEFLVADALREGADTLITAGAIQSNHVRQTAAVAAKLGLHCVALLENPIGTTAENYLTNGNRLLLDLFNTQIEMCDVLTDPDAQLQTLATRIEAQGFRPYVIPVGGSSALGAMGYVESALEIAQQCEEVVGLSSVVVASGSAGTHAGLAVGLEHLMPDVELIGVTVSRSVAEQKPKVIALQQAIAGQLALTATADIHLWDDYFAPGYGVPNDAGMEAVKLLASLEGVLLDPVYTGKAMAGLIDGISQKRFNDDGPILFIHTGGAPALFAYHPHV.

At lysine 51 the chain carries N6-(pyridoxal phosphate)lysine.

It belongs to the ACC deaminase/D-cysteine desulfhydrase family. In terms of assembly, homodimer. Pyridoxal 5'-phosphate is required as a cofactor.

It catalyses the reaction D-cysteine + H2O = hydrogen sulfide + pyruvate + NH4(+) + H(+). Catalyzes the alpha,beta-elimination reaction of D-cysteine and of several D-cysteine derivatives. It could be a defense mechanism against D-cysteine. This is D-cysteine desulfhydrase from Salmonella paratyphi A (strain AKU_12601).